We begin with the raw amino-acid sequence, 494 residues long: Cytochrome P450 2G1 (494 aa).

C439 provides a ligand contact to heme.

The protein belongs to the cytochrome P450 family. Requires heme as cofactor. In terms of tissue distribution, olfactory epithelium.

The protein resides in the endoplasmic reticulum membrane. Its subcellular location is the microsome membrane. It carries out the reaction an organic molecule + reduced [NADPH--hemoprotein reductase] + O2 = an alcohol + oxidized [NADPH--hemoprotein reductase] + H2O + H(+). Its function is as follows. Cytochromes P450 are a group of heme-thiolate monooxygenases. This isozyme seems to be implicated in olfaction. This is Cytochrome P450 2G1 (Cyp2g1) from Rattus norvegicus (Rat).